We begin with the raw amino-acid sequence, 249 residues long: Isoprenyl transferase (249 aa).

The active site involves Asp-25. Asp-25 contacts Mg(2+). Residues 26 to 29 (GNGR), Trp-30, Arg-38, His-42, and 70 to 72 (STE) each bind substrate. Catalysis depends on Asn-73, which acts as the Proton acceptor. Residues Trp-74, Arg-76, Arg-197, and 203–205 (RLS) contribute to the substrate site. Glu-216 is a binding site for Mg(2+).

The protein belongs to the UPP synthase family. As to quaternary structure, homodimer. The cofactor is Mg(2+).

In terms of biological role, catalyzes the condensation of isopentenyl diphosphate (IPP) with allylic pyrophosphates generating different type of terpenoids. The sequence is that of Isoprenyl transferase from Streptococcus thermophilus (strain CNRZ 1066).